A 284-amino-acid polypeptide reads, in one-letter code: MELYNGERPSVFRLLGKYMRKGLYSILTQGPIPTHIAFILDGNGRFAKKHKLPEGGGHKAGFLALLNVLTYCYELGVKYATIYAFSIDNFRRKPHEVQYVMNLMLEKIEGMIMEESIINAYDICVRFVGNLKLLDEPLKTAADKIMRATAKNSKFVLLLAVCYTSTDEIVHAVEESSKDKLKSDEICNDGNGDCVIKIEEMEPYSEIKLVELERNTYINPYPDVLIRTSGETRLSNYLLWQTTNCILYSPHALWPEIGLRHVVWAVINCQRHYSYLEKHKEYLK.

Asp-41 is a catalytic residue.

It belongs to the UPP synthase family. As to expression, predominantly expressed in latex.

It carries out the reaction (cis-prenyl)(n)-diphosphate + isopentenyl diphosphate = (cis-prenyl)(n+1)-diphosphate + diphosphate. Functionally, proposed to be involved in rubber biosynthesis as a particle-bound rubber transferase responsible for the cis-1,4-polymerization of isoprene subunits. Probably requires additional factors for the production of high molecular mass rubber. The chain is Rubber cis-polyprenyltransferase HRT2 (HRT2) from Hevea brasiliensis (Para rubber tree).